We begin with the raw amino-acid sequence, 562 residues long: Acetolactate synthase isozyme 1 large subunit (562 aa).

Glutamate 60 lines the thiamine diphosphate pocket. Residues arginine 162, 264–285 (HGVRSTNYILQEADLLIVLGAR), and 307–326 (DIDRAELGKIKQPHVAIQAD) contribute to the FAD site. The thiamine pyrophosphate binding stretch occupies residues 393 to 473 (QHQMWTAQAY…VKIILMNNEA (81 aa)). Aspartate 444 and asparagine 471 together coordinate Mg(2+).

This sequence belongs to the TPP enzyme family. As to quaternary structure, dimer of large and small chains. Requires Mg(2+) as cofactor. Thiamine diphosphate serves as cofactor.

It carries out the reaction 2 pyruvate + H(+) = (2S)-2-acetolactate + CO2. The protein operates within amino-acid biosynthesis; L-isoleucine biosynthesis; L-isoleucine from 2-oxobutanoate: step 1/4. Its pathway is amino-acid biosynthesis; L-valine biosynthesis; L-valine from pyruvate: step 1/4. This chain is Acetolactate synthase isozyme 1 large subunit (ilvB), found in Escherichia coli (strain K12).